Consider the following 1352-residue polypeptide: Inhibitor of Bruton tyrosine kinase (1352 aa).

2 ANK repeats span residues 51–80 and 85–114; these read FGRNAGHLASSCGKKGVLDWLIEKGVDLLV and SGWTALHRSVFYGHIDCVWSLLKHGVSLYM. RCC1 repeat units follow at residues 141–194, 195–246, and 248–301; these read PTEV…FLSQ, KGQV…VLTD, and GCVY…LWTR. The BTB 1 domain occupies 565–645; sequence HDVTFQVGNR…MYTDTCDLLT (81 aa). Positions 692 to 716 are disordered; that stretch reads AHTLSERQKSKPKSSKKGKGVGDDD. The segment covering 701–710 has biased composition (basic residues); it reads SKPKSSKKGK. Residues 769–837 enclose the BTB 2 domain; that stretch reads YDVTMKSVDG…LYTDEAVVIK (69 aa). The disordered stretch occupies residues 976-1002; that stretch reads FKKAKTRAKKKPRKRSDSSGGYTLSDV. Residues 977–989 show a composition bias toward basic residues; that stretch reads KKAKTRAKKKPRK. Position 991 is a phosphoserine (serine 991). Residues 993 to 1002 are compositionally biased toward polar residues; sequence SSGGYTLSDV. Residues serine 1005, serine 1031, serine 1034, serine 1040, serine 1046, serine 1055, serine 1084, serine 1111, serine 1113, and serine 1116 each carry the phosphoserine modification. The segment at 1032–1094 is disordered; that stretch reads EGSYAGVASP…PTTKSAPQFI (63 aa). Positions 1084–1094 are enriched in polar residues; sequence SPTTKSAPQFI.

Interacts with the PH domain of BTK.

The protein resides in the cytoplasm. The protein localises to the membrane. Functionally, acts as an inhibitor of BTK tyrosine kinase activity, thereby playing a role in B-cell development. Down-regulates BTK kinase activity, leading to interference with BTK-mediated calcium mobilization and NF-kappa-B-driven transcription. This is Inhibitor of Bruton tyrosine kinase (Ibtk) from Mus musculus (Mouse).